The chain runs to 287 residues: F-actin-capping protein subunit beta (287 aa).

Ser2 carries the post-translational modification N-acetylserine. Phosphoserine occurs at positions 85 and 92.

It belongs to the F-actin-capping protein beta subunit family. Component of the F-actin capping complex, composed of a heterodimer of an alpha and a beta subunit. Interacts with BSP1 (via C-terminus); leading to recruitment of the F-actin capping complex to actin cortical patches and the acomyosin contractile ring.

The protein localises to the cytoplasm. The protein resides in the cytoskeleton. It localises to the actin patch. Its subcellular location is the bud. It is found in the bud tip. In terms of biological role, F-actin-capping proteins bind in a Ca(2+)-independent manner to the fast growing ends of actin filaments (barbed end) thereby blocking the exchange of subunits at these ends. Unlike other capping proteins (such as gelsolin and severin), these proteins do not sever actin filaments. This is F-actin-capping protein subunit beta (CAP2) from Saccharomyces cerevisiae (strain ATCC 204508 / S288c) (Baker's yeast).